We begin with the raw amino-acid sequence, 327 residues long: Immediate early response gene 5 protein (327 aa).

2 disordered regions span residues Gly-59–Pro-166 and Gly-227–Val-313. Low complexity predominate over residues Gln-71–Gly-84. Residues Gly-253–Glu-262 show a composition bias toward acidic residues. The segment covering Asn-265–Ser-278 has biased composition (polar residues).

It belongs to the IER family. As to quaternary structure, monomer. Homodimer. Associates with the catalytic subunit of protein phosphatase PP2A. Interacts (via N- and C-terminal regions) with PPP2R2B. Interacts with PPP2R2A, PPP2R2C and PPP2R2D. Interacts (via N-terminus) with RPS6KB1. Interacts (via central region) with HSF1; this interaction promotes PPP2CA-induced HSF1 dephosphorylation, leading to enhanced HSF1 transcriptional activity. Expressed in acute myeloid leukemia (AML) cells.

The protein localises to the nucleus. Its subcellular location is the cytoplasm. In terms of biological role, plays a role as a transcription factor. Mediates positive transcriptional regulation of several chaperone genes during the heat shock response in a HSF1-dependent manner. Mediates negative transcriptional regulation of CDC25B expression. Plays a role in the dephosphorylation of the heat shock factor HSF1 and ribosomal protein S6 kinase (S6K) by the protein phosphatase PP2A. Involved in the regulation of cell proliferation and resistance to thermal stress. Involved in the cell cycle checkpoint and survival in response to ionizing radiation. Associates with chromatin to the CDC25B promoter. This is Immediate early response gene 5 protein (IER5) from Homo sapiens (Human).